The sequence spans 358 residues: Uptake hydrogenase small subunit (358 aa).

The first 45 residues, 1–45, serve as a signal peptide directing secretion; that stretch reads MSDIETFYDVMRRQGITRRSFMKSVRSPQHVLGLGPSFVPKIGEA. 8 residues coordinate [4Fe-4S] cluster: cysteine 62, cysteine 65, cysteine 160, cysteine 194, histidine 232, cysteine 235, cysteine 260, and cysteine 266. Positions 275, 294, and 297 each coordinate [3Fe-4S] cluster.

The protein belongs to the [NiFe]/[NiFeSe] hydrogenase small subunit family. As to quaternary structure, heterodimer of a large and a small subunit. [4Fe-4S] cluster is required as a cofactor. It depends on [3Fe-4S] cluster as a cofactor.

The protein resides in the cell membrane. It catalyses the reaction H2 + A = AH2. This enzyme recycles the H(2) produced by nitrogenase to increase the production of ATP and to protect nitrogenase against inhibition or damage by O(2) under carbon- or phosphate-limited conditions. The sequence is that of Uptake hydrogenase small subunit (hupA) from Rhodobacter capsulatus (Rhodopseudomonas capsulata).